Reading from the N-terminus, the 245-residue chain is 1-(5-phosphoribosyl)-5-[(5-phosphoribosylamino)methylideneamino] imidazole-4-carboxamide isomerase (245 aa).

Residue aspartate 7 is the Proton acceptor of the active site. Aspartate 129 functions as the Proton donor in the catalytic mechanism.

The protein belongs to the HisA/HisF family.

The protein localises to the cytoplasm. The catalysed reaction is 1-(5-phospho-beta-D-ribosyl)-5-[(5-phospho-beta-D-ribosylamino)methylideneamino]imidazole-4-carboxamide = 5-[(5-phospho-1-deoxy-D-ribulos-1-ylimino)methylamino]-1-(5-phospho-beta-D-ribosyl)imidazole-4-carboxamide. Its pathway is amino-acid biosynthesis; L-histidine biosynthesis; L-histidine from 5-phospho-alpha-D-ribose 1-diphosphate: step 4/9. In Proteus mirabilis (strain HI4320), this protein is 1-(5-phosphoribosyl)-5-[(5-phosphoribosylamino)methylideneamino] imidazole-4-carboxamide isomerase.